A 163-amino-acid polypeptide reads, in one-letter code: Nucleotide-binding protein MAP_4063c (163 aa).

This sequence belongs to the YajQ family.

Its function is as follows. Nucleotide-binding protein. The polypeptide is Nucleotide-binding protein MAP_4063c (Mycolicibacterium paratuberculosis (strain ATCC BAA-968 / K-10) (Mycobacterium paratuberculosis)).